A 114-amino-acid polypeptide reads, in one-letter code: Putative ANKRD40 C-terminal-like protein (114 aa).

The protein is Putative ANKRD40 C-terminal-like protein of Homo sapiens (Human).